A 70-amino-acid chain; its full sequence is Probable tautomerase RSp0893 (70 aa).

Catalysis depends on P2, which acts as the Proton acceptor; via imino nitrogen.

It belongs to the 4-oxalocrotonate tautomerase family.

The chain is Probable tautomerase RSp0893 from Ralstonia nicotianae (strain ATCC BAA-1114 / GMI1000) (Ralstonia solanacearum).